The following is an 801-amino-acid chain: Protein 4.1 (801 aa).

The disordered stretch occupies residues M1 to V187. Over residues E45–T58 the composition is skewed to low complexity. The span at S88 to D107 shows a compositional bias: basic and acidic residues. Acidic residues predominate over residues E108–D117. Over residues S141–Q151 the composition is skewed to polar residues. A compositionally biased stretch (acidic residues) spans Q154–D166. Positions V167–A182 are enriched in basic and acidic residues. The FERM domain maps to M193–S474. The tract at residues S477–K587 is hydrophilic. A disordered region spans residues R516–Q613. Positions R563–E577 are enriched in basic and acidic residues. The spectrin--actin-binding stretch occupies residues D588–P651. The segment covering A591–V601 has biased composition (polar residues). Residues D604–Q613 show a composition bias toward basic and acidic residues. A C-terminal (CTD) region spans residues R653–A801.

As to quaternary structure, binds with a high affinity to glycophorin and with lower affinity to band III protein. Associates with the nuclear mitotic apparatus. Binds calmodulin. Post-translationally, phosphorylated at multiple sites by different protein kinases and each phosphorylation event selectively modulates the protein's functions. As to expression, found exclusively in photoreceptors following the terminal mitosis of retinal neurons. When retinal synaptogenesis is complete, protein 4.1 is also expressed in the inner retina. In adult amphibian retinas, protein 4.1 is detected in photoreceptors, bipolar cells, and ganglion cell axons.

It localises to the nucleus. Its subcellular location is the cytoplasm. It is found in the cytoskeleton. The protein resides in the cell cortex. Its function is as follows. Protein 4.1 is a major structural element of the erythrocyte membrane skeleton. It plays a key role in regulating membrane physical properties of mechanical stability and deformability by stabilizing spectrin-actin interaction. May be required for dynein-dynactin complex and NUMA1 recruitment at the mitotic cell cortex during anaphase. This Xenopus laevis (African clawed frog) protein is Protein 4.1.